A 473-amino-acid polypeptide reads, in one-letter code: Photosystem II CP43 reaction center protein (473 aa).

The propeptide occupies 1 to 14; it reads MKTLYSLRRSYPVE. At Thr-15 the chain carries N-acetylthreonine. Position 15 is a phosphothreonine (Thr-15). 5 helical membrane passes run 69–93, 134–155, 178–200, 255–275, and 291–312; these read LFEV…PHLA, LIGP…KDKN, KALY…RKIT, KPFA…LSYS, and WFNN…ASQA. Glu-367 contacts [CaMn4O5] cluster. Residues 447 to 471 traverse the membrane as a helical segment; sequence RARAAAAGFEKGIDRDTEPVLFMNP.

It belongs to the PsbB/PsbC family. PsbC subfamily. PSII is composed of 1 copy each of membrane proteins PsbA, PsbB, PsbC, PsbD, PsbE, PsbF, PsbH, PsbI, PsbJ, PsbK, PsbL, PsbM, PsbT, PsbX, PsbY, PsbZ, Psb30/Ycf12, at least 3 peripheral proteins of the oxygen-evolving complex and a large number of cofactors. It forms dimeric complexes. Requires Binds multiple chlorophylls and provides some of the ligands for the Ca-4Mn-5O cluster of the oxygen-evolving complex. It may also provide a ligand for a Cl- that is required for oxygen evolution. PSII binds additional chlorophylls, carotenoids and specific lipids. as cofactor.

It is found in the plastid. Its subcellular location is the chloroplast thylakoid membrane. One of the components of the core complex of photosystem II (PSII). It binds chlorophyll and helps catalyze the primary light-induced photochemical processes of PSII. PSII is a light-driven water:plastoquinone oxidoreductase, using light energy to abstract electrons from H(2)O, generating O(2) and a proton gradient subsequently used for ATP formation. This Zygnema circumcarinatum (Green alga) protein is Photosystem II CP43 reaction center protein.